Consider the following 340-residue polypeptide: UDP-N-acetylglucosamine--N-acetylmuramyl-(pentapeptide) pyrophosphoryl-undecaprenol N-acetylglucosamine transferase (340 aa).

Residues 15–17 (TGG), Asn-127, Ser-184, Ile-230, and Gln-275 contribute to the UDP-N-acetyl-alpha-D-glucosamine site.

It belongs to the glycosyltransferase 28 family. MurG subfamily.

It is found in the cell inner membrane. The catalysed reaction is di-trans,octa-cis-undecaprenyl diphospho-N-acetyl-alpha-D-muramoyl-L-alanyl-D-glutamyl-meso-2,6-diaminopimeloyl-D-alanyl-D-alanine + UDP-N-acetyl-alpha-D-glucosamine = di-trans,octa-cis-undecaprenyl diphospho-[N-acetyl-alpha-D-glucosaminyl-(1-&gt;4)]-N-acetyl-alpha-D-muramoyl-L-alanyl-D-glutamyl-meso-2,6-diaminopimeloyl-D-alanyl-D-alanine + UDP + H(+). The protein operates within cell wall biogenesis; peptidoglycan biosynthesis. Its function is as follows. Cell wall formation. Catalyzes the transfer of a GlcNAc subunit on undecaprenyl-pyrophosphoryl-MurNAc-pentapeptide (lipid intermediate I) to form undecaprenyl-pyrophosphoryl-MurNAc-(pentapeptide)GlcNAc (lipid intermediate II). This is UDP-N-acetylglucosamine--N-acetylmuramyl-(pentapeptide) pyrophosphoryl-undecaprenol N-acetylglucosamine transferase from Vesicomyosocius okutanii subsp. Calyptogena okutanii (strain HA).